The following is an 827-amino-acid chain: Transcription factor SOX-6 (827 aa).

The segment covering 1–10 (MSSKQATSPF) has biased composition (polar residues). Positions 1–51 (MSSKQATSPFACTVDGEETMTQDLTSREKEEGSDQHPASHLPLHPIMHNKP) are disordered. A compositionally biased stretch (basic and acidic residues) spans 25–34 (TSREKEEGSD). At T119 the chain carries Phosphothreonine. The stretch at 184–257 (LAEKERQLST…QHKINLLQQQ (74 aa)) forms a coiled coil. Disordered regions lie at residues 329-360 (HVSHPQINPRLKGISDRLGRNLDPYEHGGGHS) and 380-470 (SPGA…PIGG). A compositionally biased stretch (basic and acidic residues) spans 341-357 (GISDRLGRNLDPYEHGG). At S399 the chain carries Phosphoserine. T401 bears the Phosphothreonine mark. Residues K404 and K417 each participate in a glycyl lysine isopeptide (Lys-Gly) (interchain with G-Cter in SUMO) cross-link. 2 stretches are compositionally biased toward polar residues: residues 421–431 (TAQPLNLSSRP) and 439–461 (SPTSPTQSLFPASKTSPVNLPNK). Phosphoserine occurs at positions 439 and 442. The HMG box DNA-binding region spans 620-688 (IKRPMNAFMV…IHLEKYPNYK (69 aa)). 2 disordered regions span residues 752–772 (TPSPQMTSDCSSTSASPEPSL) and 786–827 (ASLA…VSAN). Acidic residues predominate over residues 795–808 (NGEDEMEAYDDYED).

In terms of assembly, homodimer. Interacts with DAZAP2. May interact with CENPK. In terms of processing, sumoylation inhibits the transcriptional activity.

Its subcellular location is the nucleus. It localises to the cytoplasm. In terms of biological role, transcription factor that plays a key role in several developmental processes, including neurogenesis, chondrocytes differentiation and cartilage formation. Specifically binds the 5'-AACAAT-3' DNA motif present in enhancers and super-enhancers and promotes expression of genes important for chondrogenesis. Required for overt chondrogenesis when condensed prechondrocytes differentiate into early stage chondrocytes: SOX5 and SOX6 cooperatively bind with SOX9 on active enhancers and super-enhancers associated with cartilage-specific genes, and thereby potentiate SOX9's ability to transactivate. Not involved in precartilaginous condensation, the first step in chondrogenesis, during which skeletal progenitors differentiate into prechondrocytes. Together with SOX5, required to form and maintain a pool of highly proliferating chondroblasts between epiphyses and metaphyses, to form columnar chondroblasts, delay chondrocyte prehypertrophy but promote hypertrophy, and to delay terminal differentiation of chondrocytes on contact with ossification fronts. Binds to the proximal promoter region of the myelin protein MPZ gene, and is thereby involved in the differentiation of oligodendroglia in the developing spinal tube. Binds to the gene promoter of MBP and acts as a transcriptional repressor. This is Transcription factor SOX-6 from Rattus norvegicus (Rat).